We begin with the raw amino-acid sequence, 182 residues long: Large ribosomal subunit protein uL6 (182 aa).

Belongs to the universal ribosomal protein uL6 family. In terms of assembly, part of the 50S ribosomal subunit.

Its function is as follows. This protein binds to the 23S rRNA, and is important in its secondary structure. It is located near the subunit interface in the base of the L7/L12 stalk, and near the tRNA binding site of the peptidyltransferase center. This Methanococcus vannielii protein is Large ribosomal subunit protein uL6.